A 462-amino-acid polypeptide reads, in one-letter code: FAD-dependent monooxygenase opaC (462 aa).

Residue N10 is glycosylated (N-linked (GlcNAc...) asparagine). A helical transmembrane segment spans residues 14-34 (ITVIIIGLGIGGLTAAISCHL). D43 contacts FAD. N60 carries N-linked (GlcNAc...) asparagine glycosylation. R115 contributes to the FAD binding site. The active site involves R193. Positions 322 and 335 each coordinate FAD.

Belongs to the paxM FAD-dependent monooxygenase family. FAD serves as cofactor.

It localises to the membrane. It functions in the pathway secondary metabolite biosynthesis. Its function is as follows. FAD-dependent monooxygenase; part of the gene cluster that mediates the biosynthesis of oxepinamides, derivatives of anthranilyl-containing tripeptides that share an oxepin ring and a fused pyrimidinone moiety. The nonribosomal peptide synthetase (NRPS) opaA assembles the quinazolinone core with D-Phe incorporation. The first adenylation domain (A1) of opaA loads and activates anthranilic acid whereas the second A domain (A2) is for activating of L-Phe, which is then converted to D-form by the E domain. The third A domain (A3) is responsible for L-Ile activation and the terminal condensation domain C3 for cyclization and releasing the NRPS product protuboxepin K. The cytochrome P450 monooxygenase opaB then catalyzes alone the oxepin ring formation to convert protuboxepin K into protuboxepin A. The flavoenzyme opaC installs subsequently one hydroxyl group at the oxepin ring, accompanied by double bond migration, to form 15-epi-oxepinamide E. The epimerase opaE changes the D-Phe residue back to L-form, leading to oxepinamide E, which is further methylated at the hydroxyl group at C-12 by the O-methyltransferase OpaF to yield oxepinamide F. This is FAD-dependent monooxygenase opaC from Aspergillus ustus.